The following is a 156-amino-acid chain: Large ribosomal subunit protein uL11 (156 aa).

The disordered stretch occupies residues 1-20 (MAQSVKTMVEGGKATTGPPI).

This sequence belongs to the universal ribosomal protein uL11 family. In terms of assembly, part of the ribosomal stalk of the 50S ribosomal subunit. Interacts with L10 and the large rRNA to form the base of the stalk. L10 forms an elongated spine to which L12 dimers bind in a sequential fashion forming a multimeric L10(L12)X complex.

Its function is as follows. Forms part of the ribosomal stalk which helps the ribosome interact with GTP-bound translation factors. The chain is Large ribosomal subunit protein uL11 from Thermoplasma acidophilum (strain ATCC 25905 / DSM 1728 / JCM 9062 / NBRC 15155 / AMRC-C165).